Reading from the N-terminus, the 283-residue chain is 4-diphosphocytidyl-2-C-methyl-D-erythritol kinase (283 aa).

Residue K10 is part of the active site. An ATP-binding site is contributed by 94–104 (PVAAGLAGGSS). The active site involves D136.

Belongs to the GHMP kinase family. IspE subfamily.

It catalyses the reaction 4-CDP-2-C-methyl-D-erythritol + ATP = 4-CDP-2-C-methyl-D-erythritol 2-phosphate + ADP + H(+). It participates in isoprenoid biosynthesis; isopentenyl diphosphate biosynthesis via DXP pathway; isopentenyl diphosphate from 1-deoxy-D-xylulose 5-phosphate: step 3/6. In terms of biological role, catalyzes the phosphorylation of the position 2 hydroxy group of 4-diphosphocytidyl-2C-methyl-D-erythritol. The sequence is that of 4-diphosphocytidyl-2-C-methyl-D-erythritol kinase from Enterococcus faecalis (strain ATCC 700802 / V583).